Here is a 1173-residue protein sequence, read N- to C-terminus: WASH complex subunit 4 (1173 aa).

Alanine 2 carries the N-acetylalanine modification. Serine 7 is modified (phosphoserine). A coiled-coil region spans residues 27 to 56 (QLKNYGRFLEEYTSQLRRIEDALDDLIGDV). The sufficient for interaction with WASHC5 stretch occupies residues 705-1173 (KDLALFFSLN…STVSADPVVK (469 aa)). Positions 1141–1155 (AEENQEKKEKEEETK) are enriched in basic and acidic residues. A disordered region spans residues 1141-1173 (AEENQEKKEKEEETKTSNGDGPESTVSADPVVK). Residue threonine 1154 is modified to Phosphothreonine.

The protein belongs to the SWIP family. In terms of assembly, component of the WASH core complex also described as WASH regulatory complex (SHRC) composed of WASH (WASHC1, WASH2P or WASH3P), WASHC2 (WASHC2A or WASHC2C), WASHC3, WASHC4 and WASHC5. The WASH core complex associates via WASHC2 with the F-actin-capping protein dimer (formed by CAPZA1, CAPZA2 or CAPZA3 and CAPZB) in a transient or substoichiometric manner which was initially described as WASH complex.

It localises to the early endosome. Acts as a component of the WASH core complex that functions as a nucleation-promoting factor (NPF) at the surface of endosomes, where it recruits and activates the Arp2/3 complex to induce actin polymerization, playing a key role in the fission of tubules that serve as transport intermediates during endosome sorting. This chain is WASH complex subunit 4, found in Mus musculus (Mouse).